Reading from the N-terminus, the 141-residue chain is Methylglyoxal synthase (141 aa).

In terms of domain architecture, MGS-like spans 1-141; sequence MNIALIAHDK…PKLQKNKSDK (141 aa). Substrate contacts are provided by residues H8, K12, and 34–37; that span reads TGTT. Catalysis depends on D60, which acts as the Proton donor/acceptor. H87 serves as a coordination point for substrate.

This sequence belongs to the methylglyoxal synthase family.

The catalysed reaction is dihydroxyacetone phosphate = methylglyoxal + phosphate. In terms of biological role, catalyzes the formation of methylglyoxal from dihydroxyacetone phosphate. The protein is Methylglyoxal synthase of Caldicellulosiruptor bescii (strain ATCC BAA-1888 / DSM 6725 / KCTC 15123 / Z-1320) (Anaerocellum thermophilum).